We begin with the raw amino-acid sequence, 96 residues long: Co-chaperonin GroES (96 aa).

This sequence belongs to the GroES chaperonin family. In terms of assembly, heptamer of 7 subunits arranged in a ring. Interacts with the chaperonin GroEL.

The protein resides in the cytoplasm. Together with the chaperonin GroEL, plays an essential role in assisting protein folding. The GroEL-GroES system forms a nano-cage that allows encapsulation of the non-native substrate proteins and provides a physical environment optimized to promote and accelerate protein folding. GroES binds to the apical surface of the GroEL ring, thereby capping the opening of the GroEL channel. This is Co-chaperonin GroES from Actinobacillus succinogenes (strain ATCC 55618 / DSM 22257 / CCUG 43843 / 130Z).